Reading from the N-terminus, the 396-residue chain is NADH-quinone oxidoreductase subunit D (396 aa).

This sequence belongs to the complex I 49 kDa subunit family. NDH-1 is composed of 14 different subunits. Subunits NuoB, C, D, E, F, and G constitute the peripheral sector of the complex.

The protein resides in the cell inner membrane. It catalyses the reaction a quinone + NADH + 5 H(+)(in) = a quinol + NAD(+) + 4 H(+)(out). NDH-1 shuttles electrons from NADH, via FMN and iron-sulfur (Fe-S) centers, to quinones in the respiratory chain. The immediate electron acceptor for the enzyme in this species is believed to be ubiquinone. Couples the redox reaction to proton translocation (for every two electrons transferred, four hydrogen ions are translocated across the cytoplasmic membrane), and thus conserves the redox energy in a proton gradient. The sequence is that of NADH-quinone oxidoreductase subunit D from Brucella canis (strain ATCC 23365 / NCTC 10854 / RM-666).